The chain runs to 497 residues: Mechanosensitive ion channel protein 1, mitochondrial (497 aa).

The N-terminal 86 residues, 1 to 86 (MAGVRLSLLK…RAFSSKSDDF (86 aa)), are a transit peptide targeting the mitochondrion. The next 5 membrane-spanning stretches (helical) occupy residues 152–172 (DVIV…VVMP), 216–236 (LVTF…TIAA), 238–258 (YFSP…LYRW), 280–300 (VLTL…MASA), and 305–325 (VAVQ…AFAA).

Belongs to the MscS (TC 1.A.23) family.

The protein localises to the mitochondrion membrane. Mechanosensitive channel that opens in response to stretch forces in the membrane lipid bilayer. The polypeptide is Mechanosensitive ion channel protein 1, mitochondrial (MSL1) (Arabidopsis thaliana (Mouse-ear cress)).